Here is a 589-residue protein sequence, read N- to C-terminus: Protein FAM117B (589 aa).

Positions 1 to 310 are disordered; that stretch reads MSQRVRRNGS…RDKERQSPFH (310 aa). Phosphoserine is present on Ser10. The span at 16–29 shows a compositional bias: gly residues; sequence SLGGGAVATAGGPG. Residues 45 to 56 are compositionally biased toward low complexity; that stretch reads QQQQQQHGSPTR. Residues 57-85 show a composition bias toward gly residues; that stretch reads SGGGGGGNNNGGCCGGASGPAGGGGGGGP. Ser106 carries the post-translational modification Phosphoserine. A compositionally biased stretch (low complexity) spans 108–136; it reads TVATQTGASATSTRGTSPTRSAAPGARGS. The segment covering 137–146 has biased composition (pro residues); sequence PPRPPPPPPL. Composition is skewed to low complexity over residues 147-158 and 207-220; these read LGTVSSPSSSPT and PSSSPSSIIRRTSS. Residues Ser210, Ser219, Ser220, and Ser273 each carry the phosphoserine modification. Positions 292–302 are enriched in basic residues; the sequence is RSKHSSRHHRD. Phosphoserine occurs at positions 345 and 391. 2 disordered regions span residues 370 to 464 and 556 to 589; these read QDIP…NNSY and STNTEQDRVSRGTSTVMPSASLLPPPEPIEEAEG. Polar residues predominate over residues 384–397; the sequence is QRSSSTRSIDTQTP. Over residues 404–417 the composition is skewed to low complexity; it reads SNNSSRSQSVSPTS. Residues Ser449 and Ser457 each carry the phosphoserine modification.

The sequence is that of Protein FAM117B (FAM117B) from Homo sapiens (Human).